The chain runs to 768 residues: Cullin-3-B (768 aa).

The disordered stretch occupies residues 677-698 (VAAKQGESDPERKETRQKVDDD). The segment covering 682–698 (GESDPERKETRQKVDDD) has biased composition (basic and acidic residues). Residues 698–760 (DRKHEIEAAI…REYLARTPED (63 aa)) form the Cullin neddylation domain. Lys-712 is covalently cross-linked (Glycyl lysine isopeptide (Lys-Gly) (interchain with G-Cter in NEDD8)).

It belongs to the cullin family. Component of multiple BCR (BTB-CUL3-RBX1) E3 ubiquitin-protein ligase complexes formed of cul3, rbx1 and a variable BTB domain-containing protein acting as both, adapter to cullin and substrate recognition subunit. Interacts with btbd6. Post-translationally, neddylated. Attachment of NEDD8 is required for the E3 ubiquitin-protein ligase activity of the SCF-like complex.

It localises to the nucleus. It functions in the pathway protein modification; protein ubiquitination. Functionally, probable core component of cullin-based SCF-like E3 ubiquitin-protein ligase complexes which mediate the ubiquitination and subsequent proteasomal degradation of target proteins. The E3 ubiquitin-protein ligase activity of the complex is dependent on the neddylation of the cullin subunit. Involved in ER-Golgi transport by regulating the size of COPII coats, thereby playing a key role in collagen export, which is required for embryonic stem (ES) cells division. May play a role in the regulation of mittotic entry via ubiquitination of aurka. The sequence is that of Cullin-3-B (cul3b) from Xenopus laevis (African clawed frog).